A 190-amino-acid chain; its full sequence is UPF0301 protein Pfl01_5311 (190 aa).

Belongs to the UPF0301 (AlgH) family.

The protein is UPF0301 protein Pfl01_5311 of Pseudomonas fluorescens (strain Pf0-1).